The chain runs to 353 residues: Ribosomal RNA small subunit methyltransferase H (353 aa).

Residues 49-51 (GGH), Asp-68, Phe-95, Asp-126, and Gln-133 each bind S-adenosyl-L-methionine.

The protein belongs to the methyltransferase superfamily. RsmH family.

It is found in the cytoplasm. It carries out the reaction cytidine(1402) in 16S rRNA + S-adenosyl-L-methionine = N(4)-methylcytidine(1402) in 16S rRNA + S-adenosyl-L-homocysteine + H(+). Functionally, specifically methylates the N4 position of cytidine in position 1402 (C1402) of 16S rRNA. The protein is Ribosomal RNA small subunit methyltransferase H of Corynebacterium urealyticum (strain ATCC 43042 / DSM 7109).